Reading from the N-terminus, the 283-residue chain is uncharacterized protein (283 aa).

Glycine 2 carries N-myristoyl glycine; by host lipidation. Residues asparagine 31, asparagine 95, asparagine 105, asparagine 108, asparagine 137, and asparagine 147 are each glycosylated (N-linked (GlcNAc...) asparagine; by host). The next 2 helical transmembrane spans lie at 181-201 and 250-270; these read IIAA…VVYF and FIVL…LDIP. N-linked (GlcNAc...) asparagine; by host glycosylation occurs at asparagine 277.

It is found in the membrane. This is an uncharacterized protein from Acanthamoeba polyphaga (Amoeba).